A 114-amino-acid polypeptide reads, in one-letter code: Large ribosomal subunit protein uL24 (114 aa).

It belongs to the universal ribosomal protein uL24 family. In terms of assembly, part of the 50S ribosomal subunit.

In terms of biological role, one of two assembly initiator proteins, it binds directly to the 5'-end of the 23S rRNA, where it nucleates assembly of the 50S subunit. Functionally, one of the proteins that surrounds the polypeptide exit tunnel on the outside of the subunit. The protein is Large ribosomal subunit protein uL24 of Thermomicrobium roseum (strain ATCC 27502 / DSM 5159 / P-2).